Reading from the N-terminus, the 249-residue chain is Quinate/shikimate dehydrogenase (249 aa).

Substrate is bound by residues lysine 32 and aspartate 68. Residues 93 to 96, 116 to 119, lysine 166, 193 to 196, and glycine 216 contribute to the NAD(+) site; these read AGGA, NRRD, and CVYN.

The protein belongs to the shikimate dehydrogenase family. In terms of assembly, homodimer.

The enzyme catalyses L-quinate + NAD(+) = 3-dehydroquinate + NADH + H(+). The catalysed reaction is L-quinate + NADP(+) = 3-dehydroquinate + NADPH + H(+). It catalyses the reaction shikimate + NADP(+) = 3-dehydroshikimate + NADPH + H(+). It carries out the reaction shikimate + NAD(+) = 3-dehydroshikimate + NADH + H(+). Its pathway is metabolic intermediate biosynthesis; chorismate biosynthesis; chorismate from D-erythrose 4-phosphate and phosphoenolpyruvate: step 4/7. In terms of biological role, the actual biological function of YdiB remains unclear, nor is it known whether 3-dehydroshikimate or quinate represents the natural substrate. Catalyzes the reversible NAD-dependent reduction of both 3-dehydroshikimate (DHSA) and 3-dehydroquinate to yield shikimate (SA) and quinate, respectively. It can use both NAD or NADP for catalysis, however it has higher catalytic efficiency with NAD. This is Quinate/shikimate dehydrogenase from Shigella flexneri serotype 5b (strain 8401).